The primary structure comprises 134 residues: UPF0412 protein YaaI (134 aa).

Positions 1–23 (MKSVFTISASLAISLMLCCTAQA) are cleaved as a signal peptide.

It belongs to the UPF0412 family.

The sequence is that of UPF0412 protein YaaI from Escherichia coli (strain ATCC 8739 / DSM 1576 / NBRC 3972 / NCIMB 8545 / WDCM 00012 / Crooks).